A 281-amino-acid chain; its full sequence is Nucleoid occlusion protein (281 aa).

Residues 1-26 (MKHPFSRLFSFGEKEQEEAGGKQERE) are disordered. Basic and acidic residues predominate over residues 12 to 26 (GEKEQEEAGGKQERE). The H-T-H motif DNA-binding region spans 145-164 (EALAQRLGKGQSTIANKLRL).

The protein belongs to the ParB family.

It is found in the cytoplasm. It localises to the nucleoid. Its function is as follows. Effects nucleoid occlusion by binding relatively nonspecifically to DNA and preventing the assembly of the division machinery in the vicinity of the nucleoid, especially under conditions that disturb the cell cycle. It helps to coordinate cell division and chromosome segregation by preventing the formation of the Z ring through the nucleoid, which would cause chromosome breakage. The chain is Nucleoid occlusion protein from Geobacillus thermodenitrificans (strain NG80-2).